The chain runs to 491 residues: Protein nucleotidyltransferase YdiU (491 aa).

The ATP site is built by Gly-94, Gly-96, Arg-97, Lys-117, Asp-129, Gly-130, Arg-180, and Arg-187. Asp-256 serves as the catalytic Proton acceptor. Mg(2+) contacts are provided by Asn-257 and Asp-266. Residue Asp-266 coordinates ATP.

This sequence belongs to the SELO family. Requires Mg(2+) as cofactor. Mn(2+) is required as a cofactor.

It carries out the reaction L-seryl-[protein] + ATP = 3-O-(5'-adenylyl)-L-seryl-[protein] + diphosphate. It catalyses the reaction L-threonyl-[protein] + ATP = 3-O-(5'-adenylyl)-L-threonyl-[protein] + diphosphate. The catalysed reaction is L-tyrosyl-[protein] + ATP = O-(5'-adenylyl)-L-tyrosyl-[protein] + diphosphate. The enzyme catalyses L-histidyl-[protein] + UTP = N(tele)-(5'-uridylyl)-L-histidyl-[protein] + diphosphate. It carries out the reaction L-seryl-[protein] + UTP = O-(5'-uridylyl)-L-seryl-[protein] + diphosphate. It catalyses the reaction L-tyrosyl-[protein] + UTP = O-(5'-uridylyl)-L-tyrosyl-[protein] + diphosphate. Its function is as follows. Nucleotidyltransferase involved in the post-translational modification of proteins. It can catalyze the addition of adenosine monophosphate (AMP) or uridine monophosphate (UMP) to a protein, resulting in modifications known as AMPylation and UMPylation. This is Protein nucleotidyltransferase YdiU from Bacillus cytotoxicus (strain DSM 22905 / CIP 110041 / 391-98 / NVH 391-98).